We begin with the raw amino-acid sequence, 142 residues long: SPbeta prophage-derived deoxyuridine 5'-triphosphate nucleotidohydrolase YosS (142 aa).

The dUMP site is built by Ser-62 and Asn-74. Catalysis depends on Asp-80, which acts as the Proton acceptor. Positions 83 and 91 each coordinate dUMP.

The protein belongs to the dUTPase family. Homotrimer. The cofactor is Mg(2+).

It catalyses the reaction dUTP + H2O = dUMP + diphosphate + H(+). It functions in the pathway pyrimidine metabolism; dUMP biosynthesis; dUMP from dCTP (dUTP route): step 2/2. Its function is as follows. Involved in nucleotide metabolism: produces dUMP, the immediate precursor of thymidine nucleotides and decreases the intracellular concentration of dUTP, so that uracil cannot be incorporated into DNA. The Ser-62 side chain changes its position upon ligand-binding to make contacts with the nucleotide phosphates. This chain is SPbeta prophage-derived deoxyuridine 5'-triphosphate nucleotidohydrolase YosS, found in Bacillus subtilis (strain 168).